A 194-amino-acid polypeptide reads, in one-letter code: Peptidyl-tRNA hydrolase (194 aa).

Tyr-17 contacts tRNA. The active-site Proton acceptor is His-22. TRNA-binding residues include Tyr-68, Asn-70, and Asn-116.

Belongs to the PTH family. Monomer.

Its subcellular location is the cytoplasm. The enzyme catalyses an N-acyl-L-alpha-aminoacyl-tRNA + H2O = an N-acyl-L-amino acid + a tRNA + H(+). Its function is as follows. Hydrolyzes ribosome-free peptidyl-tRNAs (with 1 or more amino acids incorporated), which drop off the ribosome during protein synthesis, or as a result of ribosome stalling. Functionally, catalyzes the release of premature peptidyl moieties from peptidyl-tRNA molecules trapped in stalled 50S ribosomal subunits, and thus maintains levels of free tRNAs and 50S ribosomes. The chain is Peptidyl-tRNA hydrolase from Pseudomonas entomophila (strain L48).